A 198-amino-acid chain; its full sequence is Photosystem I assembly protein Ycf4 (198 aa).

The disordered stretch occupies residues 1 to 20 (MTASTTINKGDSPNGDSSAS). 2 consecutive transmembrane segments (helical) span residues 38-58 (WASI…SSYL) and 78-98 (LVMG…WLAI).

It belongs to the Ycf4 family.

The protein localises to the cellular thylakoid membrane. Seems to be required for the assembly of the photosystem I complex. This Trichormus variabilis (strain ATCC 29413 / PCC 7937) (Anabaena variabilis) protein is Photosystem I assembly protein Ycf4.